The primary structure comprises 341 residues: N-acetyl-gamma-glutamyl-phosphate reductase (341 aa).

The active site involves C147.

The protein belongs to the NAGSA dehydrogenase family. Type 1 subfamily.

It localises to the cytoplasm. It carries out the reaction N-acetyl-L-glutamate 5-semialdehyde + phosphate + NADP(+) = N-acetyl-L-glutamyl 5-phosphate + NADPH + H(+). Its pathway is amino-acid biosynthesis; L-arginine biosynthesis; N(2)-acetyl-L-ornithine from L-glutamate: step 3/4. Catalyzes the NADPH-dependent reduction of N-acetyl-5-glutamyl phosphate to yield N-acetyl-L-glutamate 5-semialdehyde. This is N-acetyl-gamma-glutamyl-phosphate reductase from Dehalococcoides mccartyi (strain ATCC BAA-2266 / KCTC 15142 / 195) (Dehalococcoides ethenogenes (strain 195)).